A 282-amino-acid chain; its full sequence is NADH-ubiquinone oxidoreductase chain 2 (282 aa).

7 helical membrane passes run I17–I37, S58–L78, F87–F107, I115–C135, F166–I186, T202–L222, and F232–I252.

This sequence belongs to the complex I subunit 2 family.

The protein localises to the mitochondrion inner membrane. It carries out the reaction a ubiquinone + NADH + 5 H(+)(in) = a ubiquinol + NAD(+) + 4 H(+)(out). Its function is as follows. Core subunit of the mitochondrial membrane respiratory chain NADH dehydrogenase (Complex I) that is believed to belong to the minimal assembly required for catalysis. Complex I functions in the transfer of electrons from NADH to the respiratory chain. The immediate electron acceptor for the enzyme is believed to be ubiquinone. The polypeptide is NADH-ubiquinone oxidoreductase chain 2 (Caenorhabditis elegans).